A 173-amino-acid polypeptide reads, in one-letter code: Translation initiation factor IF-3 (173 aa).

The protein belongs to the IF-3 family. As to quaternary structure, monomer.

Its subcellular location is the cytoplasm. Functionally, IF-3 binds to the 30S ribosomal subunit and shifts the equilibrium between 70S ribosomes and their 50S and 30S subunits in favor of the free subunits, thus enhancing the availability of 30S subunits on which protein synthesis initiation begins. The sequence is that of Translation initiation factor IF-3 from Ehrlichia chaffeensis (strain ATCC CRL-10679 / Arkansas).